A 427-amino-acid chain; its full sequence is MTAIVDIIGREILDSRGNPTVEVDVVLEDGSVGRAAVPSGASTGAHEAVELRDGDKARYLGKGVQKAVEAVNGELFDALGGMDAEQQVQIDQTMIELDGTPNKGRIGANAILGVSLAAAKAAAASYDMPLYRYVGGTSARTLPVPMMNIVNGGVHADNPIDFQEFMIMPVGAPTFADALRCGSEIFHTLKGELKKAGHNTNVGDEGGFAPNLPSADAALDFVMAAIGKAGYKAGDDVMLALDCAATEFFKDGAYVYGGENKTRSRSEQAKYLADLVARYPIVSIEDGMSEDDMDGWKELTDLIGSKCQLVGDDLFVTNVTRLADGIKNGRANSILIKVNQIGTLTETLAAVEMAHKAGYTAVMSHRSGETEDSTIADLAVATNCGQIKTGSLARADRTAKYNQLLRIEQELGAHAHYAGKAALKALR.

Glutamine 163 lines the (2R)-2-phosphoglycerate pocket. Catalysis depends on glutamate 205, which acts as the Proton donor. The Mg(2+) site is built by aspartate 242, glutamate 285, and aspartate 312. Residues lysine 337, arginine 366, serine 367, and lysine 388 each contribute to the (2R)-2-phosphoglycerate site. Lysine 337 acts as the Proton acceptor in catalysis.

The protein belongs to the enolase family. Mg(2+) is required as a cofactor.

Its subcellular location is the cytoplasm. It localises to the secreted. The protein localises to the cell surface. It carries out the reaction (2R)-2-phosphoglycerate = phosphoenolpyruvate + H2O. It participates in carbohydrate degradation; glycolysis; pyruvate from D-glyceraldehyde 3-phosphate: step 4/5. Functionally, catalyzes the reversible conversion of 2-phosphoglycerate (2-PG) into phosphoenolpyruvate (PEP). It is essential for the degradation of carbohydrates via glycolysis. The sequence is that of Enolase from Rhodopseudomonas palustris (strain TIE-1).